A 561-amino-acid chain; its full sequence is DNA ligase B (561 aa).

The active-site N6-AMP-lysine intermediate is lysine 125.

Belongs to the NAD-dependent DNA ligase family. LigB subfamily.

It carries out the reaction NAD(+) + (deoxyribonucleotide)n-3'-hydroxyl + 5'-phospho-(deoxyribonucleotide)m = (deoxyribonucleotide)n+m + AMP + beta-nicotinamide D-nucleotide.. In terms of biological role, catalyzes the formation of phosphodiester linkages between 5'-phosphoryl and 3'-hydroxyl groups in double-stranded DNA using NAD as a coenzyme and as the energy source for the reaction. This Salmonella newport (strain SL254) protein is DNA ligase B.